Here is a 504-residue protein sequence, read N- to C-terminus: Maturase K (504 aa).

Belongs to the intron maturase 2 family. MatK subfamily.

Its subcellular location is the plastid. The protein resides in the chloroplast. Its function is as follows. Usually encoded in the trnK tRNA gene intron. Probably assists in splicing its own and other chloroplast group II introns. This chain is Maturase K, found in Vigna mungo (Black gram).